A 183-amino-acid chain; its full sequence is uncharacterized protein (183 aa).

Residues 105 to 149 (YNTNNSNTNTNYNNNNNNNNNNNNNNNNNNNKNNNNNNNNNNSNS) are compositionally biased toward low complexity. The disordered stretch occupies residues 105–151 (YNTNNSNTNTNYNNNNNNNNNNNNNNNNNNNKNNNNNNNNNNSNSKI).

This is an uncharacterized protein from Dictyostelium discoideum (Social amoeba).